The following is a 493-amino-acid chain: Fizzy-related protein homolog (493 aa).

3 disordered regions span residues 31–51, 64–88, and 105–166; these read LTPANSPVSSPSKHGDRFIPS, INENEKSPSQNRKAKDATSDNGKDG, and EKVQ…SPRK. A Phosphothreonine modification is found at threonine 32. Residues 32 to 42 are compositionally biased toward polar residues; that stretch reads TPANSPVSSPS. At serine 36 the chain carries Phosphoserine. Lysine 69 is subject to N6-acetyllysine. 2 stretches are compositionally biased toward basic and acidic residues: residues 76–86 and 106–126; these read KAKDATSDNGK and KVQDPQTEDRRLQPSTPEHKG. Residues serine 133, serine 138, serine 146, and serine 151 each carry the phosphoserine modification. Positions 146-160 are enriched in polar residues; it reads SPYSLSPVSNKSQKL. Residue lysine 159 is modified to N6-acetyllysine. 7 WD repeats span residues 182-222, 227-266, 269-306, 311-350, 353-395, 397-438, and 441-480; these read PELQ…VTRL, VEGDSVTSVGWSERGNLVAVGTHKGFVQIWDAAAGKKLSM, GHTARVGALAWNADQLSSGSRDRMILQRDIRTPPLQSE, GHRQEVCGLKWSTDHQLLASGGNDNKLLVWNHSSLSPVQQ, EHLA…PLQC, DTGS…QVAK, and GHSYRVLYLAMSPDGEAIVTGAGDETLRFWNVFSKTRSTK.

It belongs to the WD repeat CDC20/Fizzy family. In terms of assembly, the unphosphorylated form interacts with APC/C during mitosis. Interacts with NINL. Interacts (in complex with the anaphase promoting complex APC) with MAD2L2; inhibits FZR1-mediated APC/C activation. Interacts with SIRT2. Interacts with USP37. Interacts (via WD repeats) with MAK. Interacts with RBBP8/CtIP; this interaction leads to RBBP8 proteasomal degradation. Interacts with HECW2. Interacts with SASS6; the interaction is regulated by CENATAC and leads to SASS6 proteasomal degradation. Interacts (via N-terminus) with CCNF. Interacts with CDC6. Interacts with TK1 (via the KEN box). In terms of processing, acetylated. Deacetylated by SIRT2 at Lys-69 and Lys-159; deacetylation enhances the interaction of FZR1 with CDC27, leading to activation of anaphase promoting complex/cyclosome (APC/C). Post-translationally, following DNA damage, it is dephosphorylated by CDC14B in G2 phase, leading to its reassociation with the APC/C, and allowing an efficient G2 DNA damage checkpoint. Phosphorylated by MAK.

Its pathway is protein modification; protein ubiquitination. Substrate-specific adapter for the anaphase promoting complex/cyclosome (APC/C) E3 ubiquitin-protein ligase complex. Associates with the APC/C in late mitosis, in replacement of CDC20, and activates the APC/C during anaphase and telophase. The APC/C remains active in degrading substrates to ensure that positive regulators of the cell cycle do not accumulate prematurely. At the G1/S transition FZR1 is phosphorylated, leading to its dissociation from the APC/C. Following DNA damage, it is required for the G2 DNA damage checkpoint: its dephosphorylation and reassociation with the APC/C leads to the ubiquitination of PLK1, preventing entry into mitosis. Acts as an adapter for APC/C to target the DNA-end resection factor RBBP8/CtIP for ubiquitination and subsequent proteasomal degradation. Through the regulation of RBBP8/CtIP protein turnover, may play a role in DNA damage response, favoring DNA double-strand repair through error-prone non-homologous end joining (NHEJ) over error-free, RBBP8-mediated homologous recombination (HR). The polypeptide is Fizzy-related protein homolog (Fzr1) (Mus musculus (Mouse)).